Here is a 197-residue protein sequence, read N- to C-terminus: NADH-quinone oxidoreductase subunit C (197 aa).

The protein belongs to the complex I 30 kDa subunit family. In terms of assembly, NDH-1 is composed of 14 different subunits. Subunits NuoB, C, D, E, F, and G constitute the peripheral sector of the complex.

Its subcellular location is the cell inner membrane. It carries out the reaction a quinone + NADH + 5 H(+)(in) = a quinol + NAD(+) + 4 H(+)(out). Its function is as follows. NDH-1 shuttles electrons from NADH, via FMN and iron-sulfur (Fe-S) centers, to quinones in the respiratory chain. The immediate electron acceptor for the enzyme in this species is believed to be ubiquinone. Couples the redox reaction to proton translocation (for every two electrons transferred, four hydrogen ions are translocated across the cytoplasmic membrane), and thus conserves the redox energy in a proton gradient. In Rickettsia typhi (strain ATCC VR-144 / Wilmington), this protein is NADH-quinone oxidoreductase subunit C.